We begin with the raw amino-acid sequence, 513 residues long: MQSVLVLDFGSQYTQLIARRIRELGIYSEILPYSTTPEAIREHDPKAIILSGGPTSVYGESAILPHPGIFSLGLPILGICYGLQAIANHFGGAVESSSKQEFGRAKILVDRTEGHESMLFKDIPDSDVWMSHGDKVTRMPEGFQITASSGNSEMCAIESFGPKAALKIYGLQFHPEVQHTLYGKQLLSNFLINIAGIRPDWSSKSFIEHQIEDIRQRADKGTVICGISGGVDSTVAAVLVSKAIGKQLHCVFVDNGLLRKNEARKVMEFLKPLGLNITLADSADLFLGRLKGVASPEKKRKIIGRTFIRVFEEHINEEKFLVQGTLYPDVIESQSVKGPSETIKSHHNVGGLPKRMKLKLIEPLRELFKDEVRAVGRELGIPEDILMRHPFPGPGLAVRVLGSLTRERLDILREADEIYIDELKSSGLYQQVWQAFSVLLPVQSVGVMGDKRTYENVLALRAVESTDGMTADWAHLPHDFLAKVSNRIINEVRGINRVAYDISSKPPATIEWE.

In terms of domain architecture, Glutamine amidotransferase type-1 spans 3–200; the sequence is SVLVLDFGSQ…LINIAGIRPD (198 aa). The active-site Nucleophile is Cys-80. Catalysis depends on residues His-174 and Glu-176. One can recognise a GMPS ATP-PPase domain in the interval 201 to 388; that stretch reads WSSKSFIEHQ…LGIPEDILMR (188 aa). ATP is bound at residue 228 to 234; the sequence is SGGVDST.

Homodimer.

The catalysed reaction is XMP + L-glutamine + ATP + H2O = GMP + L-glutamate + AMP + diphosphate + 2 H(+). The protein operates within purine metabolism; GMP biosynthesis; GMP from XMP (L-Gln route): step 1/1. Catalyzes the synthesis of GMP from XMP. The polypeptide is GMP synthase [glutamine-hydrolyzing] (Chlorobium luteolum (strain DSM 273 / BCRC 81028 / 2530) (Pelodictyon luteolum)).